The sequence spans 115 residues: Large ribosomal subunit protein bL19 (115 aa).

Belongs to the bacterial ribosomal protein bL19 family.

Its function is as follows. This protein is located at the 30S-50S ribosomal subunit interface and may play a role in the structure and function of the aminoacyl-tRNA binding site. This chain is Large ribosomal subunit protein bL19, found in Streptococcus suis (strain 98HAH33).